The following is a 419-amino-acid chain: Serine--tRNA ligase (419 aa).

Residue 225–227 (TAE) coordinates L-serine. Residue 256-258 (RKE) coordinates ATP. Position 279 (E279) interacts with L-serine. 343–346 (EISS) provides a ligand contact to ATP. Residue S378 coordinates L-serine.

Belongs to the class-II aminoacyl-tRNA synthetase family. Type-1 seryl-tRNA synthetase subfamily. Homodimer. The tRNA molecule binds across the dimer.

It is found in the cytoplasm. The catalysed reaction is tRNA(Ser) + L-serine + ATP = L-seryl-tRNA(Ser) + AMP + diphosphate + H(+). It carries out the reaction tRNA(Sec) + L-serine + ATP = L-seryl-tRNA(Sec) + AMP + diphosphate + H(+). It participates in aminoacyl-tRNA biosynthesis; selenocysteinyl-tRNA(Sec) biosynthesis; L-seryl-tRNA(Sec) from L-serine and tRNA(Sec): step 1/1. Its function is as follows. Catalyzes the attachment of serine to tRNA(Ser). Is also able to aminoacylate tRNA(Sec) with serine, to form the misacylated tRNA L-seryl-tRNA(Sec), which will be further converted into selenocysteinyl-tRNA(Sec). The sequence is that of Serine--tRNA ligase from Pelagibacter ubique (strain HTCC1062).